A 343-amino-acid chain; its full sequence is SUMO-activating enzyme subunit aos-1 (343 aa).

It belongs to the ubiquitin-activating E1 family. In terms of assembly, heterodimer of aos-1 and uba-2.

The protein operates within protein modification; protein sumoylation. Functionally, the dimeric enzyme acts as an E1 ligase for smo-1. It mediates ATP-dependent activation of smo-1 and formation of a thioester with a conserved cysteine residue on uba-2. The protein is SUMO-activating enzyme subunit aos-1 (aos-1) of Caenorhabditis elegans.